Consider the following 338-residue polypeptide: Aspartate carbamoyltransferase catalytic subunit (338 aa).

Arginine 59 and threonine 60 together coordinate carbamoyl phosphate. Position 87 (lysine 87) interacts with L-aspartate. Residues arginine 109, histidine 142, and glutamine 145 each coordinate carbamoyl phosphate. The L-aspartate site is built by arginine 182 and arginine 253. Residues glycine 294 and proline 295 each coordinate carbamoyl phosphate.

The protein belongs to the aspartate/ornithine carbamoyltransferase superfamily. ATCase family. In terms of assembly, heterododecamer (2C3:3R2) of six catalytic PyrB chains organized as two trimers (C3), and six regulatory PyrI chains organized as three dimers (R2).

It catalyses the reaction carbamoyl phosphate + L-aspartate = N-carbamoyl-L-aspartate + phosphate + H(+). The protein operates within pyrimidine metabolism; UMP biosynthesis via de novo pathway; (S)-dihydroorotate from bicarbonate: step 2/3. Its function is as follows. Catalyzes the condensation of carbamoyl phosphate and aspartate to form carbamoyl aspartate and inorganic phosphate, the committed step in the de novo pyrimidine nucleotide biosynthesis pathway. The sequence is that of Aspartate carbamoyltransferase catalytic subunit from Prochlorococcus marinus (strain AS9601).